The chain runs to 490 residues: GTPase Der (490 aa).

EngA-type G domains lie at 3–166 and 203–376; these read PVVA…MDDV and IKLA…DSST. GTP contacts are provided by residues 9-16, 56-60, 118-121, 209-216, 256-260, and 321-324; these read GRPNVGKS, DTGGI, NKTD, DTAGV, and NKWD. In terms of domain architecture, KH-like spans 377–461; the sequence is RRVSTAMLTR…PIRIQFKEGE (85 aa).

The protein belongs to the TRAFAC class TrmE-Era-EngA-EngB-Septin-like GTPase superfamily. EngA (Der) GTPase family. Associates with the 50S ribosomal subunit.

Its function is as follows. GTPase that plays an essential role in the late steps of ribosome biogenesis. The polypeptide is GTPase Der (Salmonella choleraesuis (strain SC-B67)).